A 955-amino-acid chain; its full sequence is 26S proteasome non-ATPase regulatory subunit 1 (955 aa).

A disordered region spans residues 279-313 (PGSTNTGTVPGSEKDSDAMEAEEKPGSTCVGKSAE). A compositionally biased stretch (basic and acidic residues) spans 290 to 303 (SEKDSDAMEAEEKP). 10 PC repeats span residues 403–436 (TATA…PGSA), 441–474 (GGLY…DIVR), 476–510 (GGSL…VTGE), 511–545 (AAGL…EKIL), 547–580 (GLAV…ILRR), 581–616 (SGMY…DVRR), 617–649 (AAVE…PHVR), 651–685 (GAAM…YVRQ), 686–726 (GALI…DVMA), and 729–761 (GAIL…PSVV). Disordered regions lie at residues 839–879 (AKKK…NFQL) and 932–955 (AHGP…YIDD). Composition is skewed to basic and acidic residues over residues 842 to 854 (KEKE…KEEE) and 861 to 874 (TEKK…KEPE). A compositionally biased stretch (acidic residues) spans 938 to 955 (EEEEQEPEPPEPFEYIDD).

It belongs to the proteasome subunit S1 family. Component of the 19S proteasome regulatory particle complex. The 26S proteasome consists of a 20S core particle (CP) and two 19S regulatory subunits (RP). The regulatory particle is made of a lid composed of 9 subunits, a base containing 6 ATPases and few additional components including PSMD1. Interacts with ADRM1.

Functionally, component of the 26S proteasome, a multiprotein complex involved in the ATP-dependent degradation of ubiquitinated proteins. This complex plays a key role in the maintenance of protein homeostasis by removing misfolded or damaged proteins, which could impair cellular functions, and by removing proteins whose functions are no longer required. Therefore, the proteasome participates in numerous cellular processes, including cell cycle progression, apoptosis, or DNA damage repair. The chain is 26S proteasome non-ATPase regulatory subunit 1 (PSMD1) from Gallus gallus (Chicken).